A 215-amino-acid chain; its full sequence is Large ribosomal subunit protein uL3 (215 aa).

At glutamine 151 the chain carries N5-methylglutamine.

The protein belongs to the universal ribosomal protein uL3 family. As to quaternary structure, part of the 50S ribosomal subunit. Forms a cluster with proteins L14 and L19. Post-translationally, methylated by PrmB.

One of the primary rRNA binding proteins, it binds directly near the 3'-end of the 23S rRNA, where it nucleates assembly of the 50S subunit. This chain is Large ribosomal subunit protein uL3, found in Rickettsia bellii (strain OSU 85-389).